Reading from the N-terminus, the 776-residue chain is A-type ATP synthase subunit A (776 aa).

It belongs to the ATPase alpha/beta chains family. Has multiple subunits with at least A(3), B(3), C, D, E, F, H, I and proteolipid K(x). In terms of processing, this protein undergoes a protein self splicing that involves a post-translational excision of the VDE intervening region (intein) followed by peptide ligation.

The protein resides in the cell membrane. It carries out the reaction ATP + H2O + 4 H(+)(in) = ADP + phosphate + 5 H(+)(out). Its function is as follows. Component of the A-type ATP synthase that produces ATP from ADP in the presence of a proton gradient across the membrane. The A chain is the catalytic subunit. This is A-type ATP synthase subunit A from Thermoplasma volcanium (strain ATCC 51530 / DSM 4299 / JCM 9571 / NBRC 15438 / GSS1).